A 758-amino-acid polypeptide reads, in one-letter code: G-protein alpha subunit activating protein gbas-1 (758 aa).

Positions 30–48 are enriched in acidic residues; it reads LDEVDNADFEREDDEEEVL. Residues 30-70 are disordered; that stretch reads LDEVDNADFEREDDEEEVLSEPSESPYTSTPKSSKRVNKTR. Residues 49–61 show a composition bias toward low complexity; sequence SEPSESPYTSTPK. The GBA signature appears at 653–666; sequence ETVTVEEFLMNSYS. The disordered stretch occupies residues 668–690; the sequence is AAPSTSTAPAPPKAPVTAPPAPQ. The span at 676-689 shows a compositional bias: pro residues; it reads PAPPKAPVTAPPAP.

As to quaternary structure, interacts (via GBA motif) with guanine nucleotide-binding protein G(o) subunit alpha goa-1 (in GDP-bound form); the interaction leads to activation of goa-1. In terms of tissue distribution, expressed in some neurons including the head and tail neurons, HSN and VC, in a subset of glial cells, in the distal tips cells and in the intestine.

Functionally, acts as a non-receptor guanine nucleotide exchange factor which binds to and activates G-protein alpha subunit goa-1. In Caenorhabditis elegans, this protein is G-protein alpha subunit activating protein gbas-1.